Here is a 373-residue protein sequence, read N- to C-terminus: Flap endonuclease 1 (373 aa).

Residues 1–105 (MGIKGLNALI…GELEKRLKRR (105 aa)) are N-domain. Asp-34 provides a ligand contact to Mg(2+). The DNA site is built by Arg-47 and Arg-71. The Mg(2+) site is built by Asp-87, Glu-159, Glu-161, Asp-180, and Asp-182. The tract at residues 123 to 254 (DIAKFERRTV…VTAFKLIKEH (132 aa)) is I-domain. Glu-159 serves as a coordination point for DNA. DNA-binding residues include Gly-232 and Asp-234. A Mg(2+)-binding site is contributed by Asp-234. Positions 340-348 (TQGRLDKFF) are interaction with PCNA. Residues 347–373 (FFVVKKRPAEEKKGKNTKEEKPKKKRK) are disordered.

It belongs to the XPG/RAD2 endonuclease family. FEN1 subfamily. As to quaternary structure, interacts with PCNA. Three molecules of FEN1 bind to one PCNA trimer with each molecule binding to one PCNA monomer. PCNA stimulates the nuclease activity without altering cleavage specificity. It depends on Mg(2+) as a cofactor. In terms of processing, phosphorylated. Phosphorylation upon DNA damage induces relocalization to the nuclear plasma.

It localises to the nucleus. The protein localises to the nucleolus. Its subcellular location is the nucleoplasm. It is found in the mitochondrion. Structure-specific nuclease with 5'-flap endonuclease and 5'-3' exonuclease activities involved in DNA replication and repair. During DNA replication, cleaves the 5'-overhanging flap structure that is generated by displacement synthesis when DNA polymerase encounters the 5'-end of a downstream Okazaki fragment. It enters the flap from the 5'-end and then tracks to cleave the flap base, leaving a nick for ligation. Also involved in the long patch base excision repair (LP-BER) pathway, by cleaving within the apurinic/apyrimidinic (AP) site-terminated flap. Acts as a genome stabilization factor that prevents flaps from equilibrating into structures that lead to duplications and deletions. Also possesses 5'-3' exonuclease activity on nicked or gapped double-stranded DNA, and exhibits RNase H activity. Also involved in replication and repair of rDNA and in repairing mitochondrial DNA. This is Flap endonuclease 1 from Komagataella phaffii (strain GS115 / ATCC 20864) (Yeast).